Consider the following 356-residue polypeptide: sn-glycerol-3-phosphate import ATP-binding protein UgpC (356 aa).

The ABC transporter domain maps to 4-235 (LKLQAVTKSW…PASLFVASFI (232 aa)). 37–44 (GPSGCGKS) serves as a coordination point for ATP.

The protein belongs to the ABC transporter superfamily. sn-glycerol-3-phosphate importer (TC 3.A.1.1.3) family. In terms of assembly, the complex is composed of two ATP-binding proteins (UgpC), two transmembrane proteins (UgpA and UgpE) and a solute-binding protein (UgpB).

The protein localises to the cell inner membrane. The enzyme catalyses sn-glycerol 3-phosphate(out) + ATP + H2O = sn-glycerol 3-phosphate(in) + ADP + phosphate + H(+). Part of the ABC transporter complex UgpBAEC involved in sn-glycerol-3-phosphate (G3P) import. Responsible for energy coupling to the transport system. This chain is sn-glycerol-3-phosphate import ATP-binding protein UgpC, found in Shigella sonnei (strain Ss046).